A 335-amino-acid polypeptide reads, in one-letter code: tRNA N6-adenosine threonylcarbamoyltransferase (335 aa).

His109, His113, and Tyr130 together coordinate a divalent metal cation. Substrate is bound by residues 130 to 134, Asp162, Gly177, Glu181, and Asn266; that span reads YVSGG. Asp294 is an a divalent metal cation binding site.

This sequence belongs to the KAE1 / TsaD family. In terms of assembly, component of the EKC/KEOPS complex composed of at least tp53rk, tprkb, osgep and lage3; the whole complex dimerizes. Requires a divalent metal cation as cofactor.

It localises to the cytoplasm. Its subcellular location is the nucleus. It carries out the reaction L-threonylcarbamoyladenylate + adenosine(37) in tRNA = N(6)-L-threonylcarbamoyladenosine(37) in tRNA + AMP + H(+). Component of the EKC/KEOPS complex that is required for the formation of a threonylcarbamoyl group on adenosine at position 37 (t(6)A37) in tRNAs that read codons beginning with adenine. The complex is probably involved in the transfer of the threonylcarbamoyl moiety of threonylcarbamoyl-AMP (TC-AMP) to the N6 group of A37. OSGEP likely plays a direct catalytic role in this reaction, but requires other protein(s) of the complex to fulfill this activity. This chain is tRNA N6-adenosine threonylcarbamoyltransferase, found in Danio rerio (Zebrafish).